The sequence spans 1380 residues: Carboxypeptidase D (1380 aa).

The N-terminal stretch at 1-31 (MASGRDERPPWRLGRLLLLMCLLLLGSSARA) is a signal peptide. The Extracellular portion of the chain corresponds to 32–1299 (AHIKKAEATT…DNRIFGLPRE (1268 aa)). Residues 57 to 380 (RYYHEEELES…ESLITLIEKV (324 aa)) enclose the Peptidase M14 1 domain. Histidine 139 and glutamate 142 together coordinate Zn(2+). Residues 162–164 (RGD) carry the Cell attachment site motif. Asparagine 172 is a glycosylation site (N-linked (GlcNAc...) asparagine). The disordered stretch occupies residues 190 to 232 (AREGDCGFGDGGPSGASGRDNSRGRDLNRSFPDQFSTGEPPAL). Gly residues predominate over residues 195–204 (CGFGDGGPSG). A glycan (N-linked (GlcNAc...) asparagine) is linked at asparagine 217. Zn(2+) is bound at residue histidine 257. Tyrosine 265 bears the Phosphotyrosine mark. A Phosphoserine modification is found at serine 270. The active-site Proton donor/acceptor is glutamate 350. N-linked (GlcNAc...) asparagine glycosylation is found at asparagine 399, asparagine 410, asparagine 429, and asparagine 522. In terms of domain architecture, Peptidase M14 2 spans 502 to 792 (HHHHFPDMEI…RSLIQFMKQV (291 aa)). Zn(2+) is bound by residues histidine 564 and glutamate 567. Asparagine 626 is a glycosylation site (N-linked (GlcNAc...) asparagine). Residue histidine 671 participates in Zn(2+) binding. Glutamate 762 (proton donor/acceptor) is an active-site residue. 4 N-linked (GlcNAc...) asparagine glycosylation sites follow: asparagine 811, asparagine 855, asparagine 867, and asparagine 879. A disordered region spans residues 874 to 899 (STDSNNESKKGKGASSSTNDASDPTT). A compositionally biased stretch (polar residues) spans 887 to 897 (ASSSTNDASDP). The region spanning 932–1211 (RYHSYKDLSE…RSLLSMLVEV (280 aa)) is the Peptidase M14 3 domain. N-linked (GlcNAc...) asparagine glycosylation is found at asparagine 955, asparagine 978, asparagine 1070, and asparagine 1142. Residues 1300-1320 (LVVTVSGATMSALILTACIIW) form a helical membrane-spanning segment. Residues cysteine 1317, cysteine 1321, and cysteine 1323 are each lipidated (S-palmitoyl cysteine). Over 1321 to 1380 (CICSIKSNRHKDGFHRLRQHHDEYEDEIRMMSTGSKKSLLSHEFQDETDTEEETLYSSKH) the chain is Cytoplasmic. Phosphoserine occurs at positions 1358 and 1361. Residues 1359-1380 (LLSHEFQDETDTEEETLYSSKH) are disordered. Phosphothreonine occurs at positions 1368 and 1370.

Belongs to the peptidase M14 family. Zn(2+) serves as cofactor. In terms of tissue distribution, highly expressed in placenta, pancreas and hepatoma cells. Lower levels found in skeletal muscle, heart and colon carcinoma and melanoma cell lines.

The protein resides in the cell membrane. The enzyme catalyses Releases C-terminal Arg and Lys from polypeptides.. The protein is Carboxypeptidase D (CPD) of Homo sapiens (Human).